We begin with the raw amino-acid sequence, 180 residues long: 3-deoxy-D-manno-octulosonate 8-phosphate phosphatase KdsC (180 aa).

Mg(2+) is bound by residues Asp14 and Asp16. Residues Asp16, 37 to 41, Lys45, Arg60, Arg68, and Lys84 each bind substrate; that span reads HVRDG. Asp107 serves as a coordination point for Mg(2+).

Belongs to the KdsC family. In terms of assembly, homotetramer. The cofactor is Mg(2+).

It carries out the reaction 3-deoxy-alpha-D-manno-2-octulosonate-8-phosphate + H2O = 3-deoxy-alpha-D-manno-oct-2-ulosonate + phosphate. Functionally, catalyzes the hydrolysis of 3-deoxy-D-manno-octulosonate 8-phosphate (KDO 8-P) to 3-deoxy-D-manno-octulosonate (KDO) and inorganic phosphate. The protein is 3-deoxy-D-manno-octulosonate 8-phosphate phosphatase KdsC of Haemophilus influenzae (strain ATCC 51907 / DSM 11121 / KW20 / Rd).